The primary structure comprises 182 residues: Probable nicotinate-nucleotide adenylyltransferase (182 aa).

This sequence belongs to the NadD family.

The enzyme catalyses nicotinate beta-D-ribonucleotide + ATP + H(+) = deamido-NAD(+) + diphosphate. Its pathway is cofactor biosynthesis; NAD(+) biosynthesis; deamido-NAD(+) from nicotinate D-ribonucleotide: step 1/1. Functionally, catalyzes the reversible adenylation of nicotinate mononucleotide (NaMN) to nicotinic acid adenine dinucleotide (NaAD). This chain is Probable nicotinate-nucleotide adenylyltransferase, found in Sulfurimonas denitrificans (strain ATCC 33889 / DSM 1251) (Thiomicrospira denitrificans (strain ATCC 33889 / DSM 1251)).